A 76-amino-acid polypeptide reads, in one-letter code: uncharacterized protein (76 aa).

Residues 15 to 69 (VRIVRKEQNLRQDELAGVAGVGLRFIVDLEAGKPTAQIGKVLQVLQTLGCSIDIL) enclose the HTH cro/C1-type domain. The H-T-H motif DNA-binding region spans 26–45 (QDELAGVAGVGLRFIVDLEA).

This is an uncharacterized protein from Sinorhizobium fredii (strain NBRC 101917 / NGR234).